Reading from the N-terminus, the 40-residue chain is Photosystem II reaction center protein J (40 aa).

The helical transmembrane segment at 8-28 (IPLWIIGTGAGILVIGLIGIF) threads the bilayer.

This sequence belongs to the PsbJ family. PSII is composed of 1 copy each of membrane proteins PsbA, PsbB, PsbC, PsbD, PsbE, PsbF, PsbH, PsbI, PsbJ, PsbK, PsbL, PsbM, PsbT, PsbX, PsbY, PsbZ, Psb30/Ycf12, at least 3 peripheral proteins of the oxygen-evolving complex and a large number of cofactors. It forms dimeric complexes.

The protein resides in the plastid. It localises to the chloroplast thylakoid membrane. In terms of biological role, one of the components of the core complex of photosystem II (PSII). PSII is a light-driven water:plastoquinone oxidoreductase that uses light energy to abstract electrons from H(2)O, generating O(2) and a proton gradient subsequently used for ATP formation. It consists of a core antenna complex that captures photons, and an electron transfer chain that converts photonic excitation into a charge separation. In Aethionema grandiflorum (Persian stone-cress), this protein is Photosystem II reaction center protein J.